A 945-amino-acid polypeptide reads, in one-letter code: Isoleucine--tRNA ligase (945 aa).

The 'HIGH' region motif lies at 66-76 (PYANGDIHLGH). E581 contributes to the L-isoleucyl-5'-AMP binding site. Positions 622–626 (KMSKS) match the 'KMSKS' region motif. K625 is an ATP binding site. 4 residues coordinate Zn(2+): C908, C911, C928, and C931.

It belongs to the class-I aminoacyl-tRNA synthetase family. IleS type 1 subfamily. As to quaternary structure, monomer. Zn(2+) is required as a cofactor.

The protein localises to the cytoplasm. The enzyme catalyses tRNA(Ile) + L-isoleucine + ATP = L-isoleucyl-tRNA(Ile) + AMP + diphosphate. In terms of biological role, catalyzes the attachment of isoleucine to tRNA(Ile). As IleRS can inadvertently accommodate and process structurally similar amino acids such as valine, to avoid such errors it has two additional distinct tRNA(Ile)-dependent editing activities. One activity is designated as 'pretransfer' editing and involves the hydrolysis of activated Val-AMP. The other activity is designated 'posttransfer' editing and involves deacylation of mischarged Val-tRNA(Ile). The chain is Isoleucine--tRNA ligase from Paraburkholderia xenovorans (strain LB400).